The sequence spans 411 residues: Inhibin beta B chain (411 aa).

An N-terminal signal peptide occupies residues 1–28; sequence MDGLPGRALGAACLLLLAAGWLGPEAWG. A disordered region spans residues 27-69; the sequence is WGSPTPPPSPAAPPPPPPPGAPGGSQDTCTSCGGGGGGFRRPE. A propeptide spanning residues 29–296 is cleaved from the precursor; the sequence is SPTPPPSPAA…GDSRHRIRKR (268 aa). A compositionally biased stretch (pro residues) spans 30 to 47; it reads PTPPPSPAAPPPPPPPGA. N-linked (GlcNAc...) asparagine glycosylation is present at asparagine 97. Disulfide bonds link cysteine 300-cysteine 308, cysteine 307-cysteine 376, cysteine 336-cysteine 408, and cysteine 340-cysteine 410.

This sequence belongs to the TGF-beta family. As to quaternary structure, dimeric, linked by one or more disulfide bonds. Inhibin B is a dimer of alpha and beta-B. Activin B is a homodimer of beta-B. Activin AB is a dimer of beta-A and beta-B. Interacts with FST and FSTL3. In terms of tissue distribution, alpha- and beta-B subunits are the predominant forms found in rat testis. Also expressed in ovary.

The protein resides in the secreted. Its function is as follows. Inhibins and activins inhibit and activate, respectively, the secretion of follitropin by the pituitary gland. Inhibins/activins are involved in regulating a number of diverse functions such as hypothalamic and pituitary hormone secretion, gonadal hormone secretion, germ cell development and maturation, erythroid differentiation, insulin secretion, nerve cell survival, embryonic axial development or bone growth, depending on their subunit composition. Inhibins appear to oppose the functions of activins. In terms of biological role, activin B is a dimer of alpha and beta-B that plays a role in several essential biological processes including embryonic development, stem cell maintenance and differentiation, haematopoiesis, cell proliferation and wound healing. Signals through type I receptor ACVR1C, abundantly expressed in pancreatic beta cells, and type II receptors like ACVR2A. Upon ligand binding, these receptors phosphorylate intracellular signaling mediators SMAD2 and SMAD3, which form a complex with SMAD4, translocate to the nucleus, and regulate gene expression. Plays a crucial role in the induction of hepcidin by inflammation through activation of ACVR1C and subsequent phosphorylation of SMAD1/5/8. Regulates adipocyte lipid metabolism by decreasing non-esterified fatty acids and glycerol release and increases intracellular triglyceride content. Stimulates wound healing by promoting cell migration and hair follicle regeneration through the JNK and ERK signaling pathways downstream of RHOA. Functionally, inhibin B is a dimer of alpha and beta-B that plays a crucial role in the regulation of the reproductive system by inhibiting the secretion of follicle-stimulating hormone (FSH) from the anterior pituitary gland. Thereby, maintains reproductive homeostasis in both males and females. Acts as a more potent suppressor of FSH release than inhibin A. Functions as competitive receptor antagonist binding activin type II receptors with high affinity in the presence of the TGF-beta type III coreceptor/TGFBR3L. The polypeptide is Inhibin beta B chain (Inhbb) (Rattus norvegicus (Rat)).